Consider the following 302-residue polypeptide: 33 kDa chaperonin (302 aa).

Cystine bridges form between cysteine 255–cysteine 257 and cysteine 288–cysteine 291.

It belongs to the HSP33 family. In terms of processing, under oxidizing conditions two disulfide bonds are formed involving the reactive cysteines. Under reducing conditions zinc is bound to the reactive cysteines and the protein is inactive.

The protein localises to the cytoplasm. Redox regulated molecular chaperone. Protects both thermally unfolding and oxidatively damaged proteins from irreversible aggregation. Plays an important role in the bacterial defense system toward oxidative stress. This Caulobacter vibrioides (strain ATCC 19089 / CIP 103742 / CB 15) (Caulobacter crescentus) protein is 33 kDa chaperonin.